Reading from the N-terminus, the 273-residue chain is Progestin and adipoQ receptor family member 4 (273 aa).

Transmembrane regions (helical) follow at residues 52-72 (IYTHGLALLGFLVLVPMTMPW), 79-99 (GWLGGTHCVACLVPPAASVLY), 115-135 (LLALDMCGVCLVNTLGALPII), 185-205 (LLVFGARGVGLGSGAPGSLPC), and 245-265 (LLSVGSILQLHAGVVPDLLWA).

It belongs to the ADIPOR family. Interacts with CERS2 and CERS5; the interaction regulates CERS2 and CERS5 stabilities and activities and is inhibited in presence of ceramides. As to expression, expressed in adipose tissue.

The protein localises to the golgi apparatus membrane. Functionally, plays a role in maintaining adipose tissue function through the regulation of ceramide levels. Mediates the stability of ceramide synthetases, CERS2 and CERS5, and their activities. The protein is Progestin and adipoQ receptor family member 4 of Mus musculus (Mouse).